The chain runs to 225 residues: J-type co-chaperone jac1, mitochondrial (225 aa).

The transit peptide at 1-49 (MLKQAGNQSFRPFISFAQKSLFNRQITGNHWIFARFKFYPLNKIVNYNH) directs the protein to the mitochondrion. Positions 61–137 (NFYKQFEGDI…LTRAEYILQL (77 aa)) constitute a J domain. Positions 98-100 (HPD) match the HSP70 binding motif.

It belongs to the HscB family. As to quaternary structure, interacts with ssc1.

Its subcellular location is the mitochondrion matrix. In terms of biological role, co-chaperone required for the assembly of iron-sulfur (Fe/S) clusters in mitochondria. Stimulates the ATPase activity of the mitochondrial Hsp70 chaperone ssc1, to mediate the transfer of iron-sulfur clusters from isu1 to grx5. The chain is J-type co-chaperone jac1, mitochondrial from Schizosaccharomyces pombe (strain 972 / ATCC 24843) (Fission yeast).